The following is a 520-amino-acid chain: Probable glycine dehydrogenase (decarboxylating) subunit 2 (520 aa).

The segment at 1 to 29 (MWRQSRWNEPLITEMSRRGRRGALPPRPD) is disordered. Residue Lys279 is modified to N6-(pyridoxal phosphate)lysine.

It belongs to the GcvP family. C-terminal subunit subfamily. In terms of assembly, the glycine cleavage system is composed of four proteins: P, T, L and H. In this organism, the P 'protein' is a heterodimer of two subunits. The cofactor is pyridoxal 5'-phosphate.

It carries out the reaction N(6)-[(R)-lipoyl]-L-lysyl-[glycine-cleavage complex H protein] + glycine + H(+) = N(6)-[(R)-S(8)-aminomethyldihydrolipoyl]-L-lysyl-[glycine-cleavage complex H protein] + CO2. The glycine cleavage system catalyzes the degradation of glycine. The P protein binds the alpha-amino group of glycine through its pyridoxal phosphate cofactor; CO(2) is released and the remaining methylamine moiety is then transferred to the lipoamide cofactor of the H protein. In Aeropyrum pernix (strain ATCC 700893 / DSM 11879 / JCM 9820 / NBRC 100138 / K1), this protein is Probable glycine dehydrogenase (decarboxylating) subunit 2.